The chain runs to 538 residues: Cytochrome c-552 (538 aa).

Residues 1 to 55 form the signal peptide; that stretch reads MKIYLRFVWILIIILNFLLNLFITTNGVIIVNAFKKSLIVAASFASLSLFNSATA. Residue H133 participates in heme c binding. 3 residues coordinate heme: C161, C164, and K165. Heme c contacts are provided by C199, C202, H203, C264, C267, and H268. Ca(2+)-binding residues include E270, Y271, K316, and Q318. Y271 lines the substrate pocket. H319 lines the substrate pocket. 9 residues coordinate heme c: H330, C337, C340, H341, H356, C369, C372, H373, and H448.

It belongs to the cytochrome c-552 family. Ca(2+) serves as cofactor. It depends on heme c as a cofactor.

The protein resides in the periplasm. The catalysed reaction is 6 Fe(III)-[cytochrome c] + NH4(+) + 2 H2O = 6 Fe(II)-[cytochrome c] + nitrite + 8 H(+). It functions in the pathway nitrogen metabolism; nitrate reduction (assimilation). Functionally, catalyzes the reduction of nitrite to ammonia, consuming six electrons in the process. The protein is Cytochrome c-552 of Haemophilus influenzae (strain ATCC 51907 / DSM 11121 / KW20 / Rd).